Here is a 176-residue protein sequence, read N- to C-terminus: dCTP deaminase (176 aa).

DCTP contacts are provided by residues 99–104 and Asp-115; that span reads RSTLAR. Glu-125 functions as the Proton donor/acceptor in the catalytic mechanism. Gln-163 is a dCTP binding site.

Belongs to the dCTP deaminase family. In terms of assembly, homotrimer.

It catalyses the reaction dCTP + H2O + H(+) = dUTP + NH4(+). It functions in the pathway pyrimidine metabolism; dUMP biosynthesis; dUMP from dCTP (dUTP route): step 1/2. Functionally, catalyzes the deamination of dCTP to dUTP. This chain is dCTP deaminase, found in Pyrobaculum aerophilum (strain ATCC 51768 / DSM 7523 / JCM 9630 / CIP 104966 / NBRC 100827 / IM2).